Here is a 740-residue protein sequence, read N- to C-terminus: Catalase-peroxidase (740 aa).

Positions 107 to 229 (WHAAGTYRIH…LAAVQMGLIY (123 aa)) form a cross-link, tryptophyl-tyrosyl-methioninium (Trp-Tyr) (with M-255). His-108 serves as the catalytic Proton acceptor. The tryptophyl-tyrosyl-methioninium (Tyr-Met) (with W-107) cross-link spans 229 to 255 (YVNPEGPNGNPDPMAAAVDIRETFRRM). His-270 is a binding site for heme b. Trp-321 acts as the Tryptophan radical intermediate in catalysis.

It belongs to the peroxidase family. Peroxidase/catalase subfamily. Homodimer. The cofactor is heme b. In terms of processing, formation of the three residue Trp-Tyr-Met cross-link is important for the catalase, but not the peroxidase activity of the enzyme.

The catalysed reaction is H2O2 + AH2 = A + 2 H2O. It carries out the reaction 2 H2O2 = O2 + 2 H2O. Its function is as follows. Bifunctional enzyme with both catalase and broad-spectrum peroxidase activity, oxidizing various electron donors including NADP(H). Protects M.tuberculosis against toxic reactive oxygen species (ROS) including hydrogen peroxide as well as organic peroxides and thus contributes to its survival within host macrophages by countering the phagocyte oxidative burst. Also displays efficient peroxynitritase activity, which may help the bacterium to persist in macrophages. In terms of biological role, catalyzes the oxidative activation of the antitubercular pro-drug isoniazid (INH) to generate an isonicotinoyl radical that then reacts nonenzymatically with NAD to form an isonicotinoyl-NAD adduct which inhibits InhA. The chain is Catalase-peroxidase from Mycobacterium tuberculosis (strain CDC 1551 / Oshkosh).